An 807-amino-acid chain; its full sequence is Phenylalanine--tRNA ligase beta subunit (807 aa).

In terms of domain architecture, tRNA-binding spans 39-156 (AGEFSGVVIG…SDAPLGQCVR (118 aa)). The 80-residue stretch at 409–488 (PQTKDVNLRR…RIFGYNNIPN (80 aa)) folds into the B5 domain. Mg(2+) is bound by residues Asp-466, Asp-472, Glu-475, and Glu-476. The 94-residue stretch at 713-806 (SRFPANRRDL…LKTELNASLR (94 aa)) folds into the FDX-ACB domain.

The protein belongs to the phenylalanyl-tRNA synthetase beta subunit family. Type 1 subfamily. Tetramer of two alpha and two beta subunits. The cofactor is Mg(2+).

The protein localises to the cytoplasm. It carries out the reaction tRNA(Phe) + L-phenylalanine + ATP = L-phenylalanyl-tRNA(Phe) + AMP + diphosphate + H(+). This Colwellia psychrerythraea (strain 34H / ATCC BAA-681) (Vibrio psychroerythus) protein is Phenylalanine--tRNA ligase beta subunit.